A 310-amino-acid polypeptide reads, in one-letter code: Ribosomal protein uL3 glutamine methyltransferase (310 aa).

It belongs to the protein N5-glutamine methyltransferase family. PrmB subfamily.

It carries out the reaction L-glutaminyl-[ribosomal protein uL3] + S-adenosyl-L-methionine = N(5)-methyl-L-glutaminyl-[ribosomal protein uL3] + S-adenosyl-L-homocysteine + H(+). Functionally, specifically methylates large ribosomal subunit protein uL3 on 'Gln-150'. This chain is Ribosomal protein uL3 glutamine methyltransferase, found in Salmonella typhi.